A 210-amino-acid polypeptide reads, in one-letter code: Na(+)-translocating NADH-quinone reductase subunit D (210 aa).

6 helical membrane passes run 14 to 34 (PIVSNNPIALQVLGVCSALAV), 42 to 62 (LVMTIALTAVCACSNLFISML), 72 to 92 (IIVQMTIIASLVIVVDQVLQA), 103 to 123 (VFVGLIITNCIVMGRAEAYAM), 131 to 151 (FMDGIGNGLGYGAILLSVGFV), and 178 to 198 (NGLLLLPPSAFFLIGTLIWII).

It belongs to the NqrDE/RnfAE family. In terms of assembly, composed of six subunits; NqrA, NqrB, NqrC, NqrD, NqrE and NqrF.

It is found in the cell inner membrane. It carries out the reaction a ubiquinone + n Na(+)(in) + NADH + H(+) = a ubiquinol + n Na(+)(out) + NAD(+). Functionally, NQR complex catalyzes the reduction of ubiquinone-1 to ubiquinol by two successive reactions, coupled with the transport of Na(+) ions from the cytoplasm to the periplasm. NqrA to NqrE are probably involved in the second step, the conversion of ubisemiquinone to ubiquinol. The protein is Na(+)-translocating NADH-quinone reductase subunit D of Shewanella woodyi (strain ATCC 51908 / MS32).